A 68-amino-acid chain; its full sequence is Guanine nucleotide-binding protein G(I)/G(S)/G(O) subunit gamma-5B (68 aa).

The 66-residue stretch at 3-68 folds into the G protein gamma domain; sequence GFSSVAATKK…FRPQKVCSFL (66 aa). Cys65 bears the Cysteine methyl ester mark. Cys65 carries the S-geranylgeranyl cysteine lipid modification. The propeptide at 66–68 is removed in mature form; the sequence is SFL.

It belongs to the G protein gamma family. In terms of assembly, g proteins are composed of 3 units; alpha, beta and gamma.

Its subcellular location is the cell membrane. In terms of biological role, guanine nucleotide-binding proteins (G proteins) are involved as a modulator or transducer in various transmembrane signaling systems. The beta and gamma chains are required for the GTPase activity, for replacement of GDP by GTP, and for G protein-effector interaction. The polypeptide is Guanine nucleotide-binding protein G(I)/G(S)/G(O) subunit gamma-5B (Homo sapiens (Human)).